The following is a 485-amino-acid chain: E3 ubiquitin-protein ligase TRIM58 (485 aa).

An RING-type zinc finger spans residues C15–R59. Residues A90–L131 form a B box-type zinc finger. Positions 95, 98, 117, and 123 each coordinate Zn(2+). The stretch at L192–R241 forms a coiled coil. The B30.2/SPRY domain occupies D271–G466.

This sequence belongs to the TRIM/RBCC family. In terms of tissue distribution, expressed in erythroblasts.

The catalysed reaction is S-ubiquitinyl-[E2 ubiquitin-conjugating enzyme]-L-cysteine + [acceptor protein]-L-lysine = [E2 ubiquitin-conjugating enzyme]-L-cysteine + N(6)-ubiquitinyl-[acceptor protein]-L-lysine.. The protein operates within protein modification; protein ubiquitination. In terms of biological role, E3 ubiquitin ligase induced during late erythropoiesis. Directly binds and ubiquitinates the intermediate chain of the microtubule motor dynein (DYNC1LI1/DYNC1LI2), stimulating the degradation of the dynein holoprotein complex. May participate in the erythroblast enucleation process through regulation of nuclear polarization. This Mus musculus (Mouse) protein is E3 ubiquitin-protein ligase TRIM58 (Trim58).